A 67-amino-acid chain; its full sequence is Large ribosomal subunit protein uL29 (67 aa).

The protein belongs to the universal ribosomal protein uL29 family.

This chain is Large ribosomal subunit protein uL29, found in Moorella thermoacetica (strain ATCC 39073 / JCM 9320).